Reading from the N-terminus, the 594-residue chain is UV-stimulated scaffold protein A homolog (594 aa).

The segment at 24 to 170 is VHS-like; the sequence is RKNLNRFIRE…VTLKKTKFVD (147 aa). Residues 170–198 adopt a coiled-coil conformation; the sequence is DYENGAKKIEAERKRKKILEERKMKMIEN. The UVSSA-type zinc finger occupies 466 to 493; sequence RKVCLAKMKSGKLCPRKDYYTCPLHGKI. C469, C479, C487, and H490 together coordinate Zn(2+). A coiled-coil region spans residues 503-540; that stretch reads INEEDRLEENYRKEQNHLKEADKIRQMIEKEYESKTKR. The segment at 533–558 is disordered; it reads EYESKTKRRKKHDVDTTASEDVRNRL. Residues 544–558 show a composition bias toward basic and acidic residues; that stretch reads HDVDTTASEDVRNRL.

Belongs to the UVSSA family.

It is found in the chromosome. Its function is as follows. Factor involved in transcription-coupled nucleotide excision repair (TC-NER) in response to UV damage. TC-NER allows RNA polymerase II-blocking lesions to be rapidly removed from the transcribed strand of active genes. The polypeptide is UV-stimulated scaffold protein A homolog (Caenorhabditis elegans).